The chain runs to 590 residues: Membrane protein insertase YidC (590 aa).

A run of 5 helical transmembrane segments spans residues 5–25, 368–388, 433–453, 483–503, and 519–539; these read SVIG…FMKP, GLII…LSLA, LGGC…FYVF, LPLY…TVFF, and IMMW…PAGL.

Belongs to the OXA1/ALB3/YidC family. Type 1 subfamily. As to quaternary structure, interacts with the Sec translocase complex via SecD. Specifically interacts with transmembrane segments of nascent integral membrane proteins during membrane integration.

It localises to the cell inner membrane. Its function is as follows. Required for the insertion and/or proper folding and/or complex formation of integral membrane proteins into the membrane. Involved in integration of membrane proteins that insert both dependently and independently of the Sec translocase complex, as well as at least some lipoproteins. Aids folding of multispanning membrane proteins. This is Membrane protein insertase YidC from Chlorobaculum tepidum (strain ATCC 49652 / DSM 12025 / NBRC 103806 / TLS) (Chlorobium tepidum).